The primary structure comprises 620 residues: Chaperone protein HscA homolog (620 aa).

This sequence belongs to the heat shock protein 70 family.

Functionally, chaperone involved in the maturation of iron-sulfur cluster-containing proteins. Has a low intrinsic ATPase activity which is markedly stimulated by HscB. In Pseudomonas fluorescens (strain ATCC BAA-477 / NRRL B-23932 / Pf-5), this protein is Chaperone protein HscA homolog.